Here is a 91-residue protein sequence, read N- to C-terminus: Large ribosomal subunit protein bL27 (91 aa).

The segment covering 1–10 (MAQKKGGGST) has biased composition (gly residues). Positions 1 to 20 (MAQKKGGGSTRNGRDSQPKM) are disordered.

The protein belongs to the bacterial ribosomal protein bL27 family.

This is Large ribosomal subunit protein bL27 from Verminephrobacter eiseniae (strain EF01-2).